Reading from the N-terminus, the 246-residue chain is Small ribosomal subunit protein uS2 (246 aa).

It belongs to the universal ribosomal protein uS2 family.

The polypeptide is Small ribosomal subunit protein uS2 (Burkholderia cenocepacia (strain ATCC BAA-245 / DSM 16553 / LMG 16656 / NCTC 13227 / J2315 / CF5610) (Burkholderia cepacia (strain J2315))).